We begin with the raw amino-acid sequence, 316 residues long: Ribosomal RNA small subunit methyltransferase H (316 aa).

S-adenosyl-L-methionine contacts are provided by residues 35–37, aspartate 55, phenylalanine 79, aspartate 101, and glutamine 108; that span reads GGH.

The protein belongs to the methyltransferase superfamily. RsmH family.

It localises to the cytoplasm. The catalysed reaction is cytidine(1402) in 16S rRNA + S-adenosyl-L-methionine = N(4)-methylcytidine(1402) in 16S rRNA + S-adenosyl-L-homocysteine + H(+). Functionally, specifically methylates the N4 position of cytidine in position 1402 (C1402) of 16S rRNA. The chain is Ribosomal RNA small subunit methyltransferase H from Aliivibrio salmonicida (strain LFI1238) (Vibrio salmonicida (strain LFI1238)).